The primary structure comprises 394 residues: Carbamoyl phosphate synthase small chain (394 aa).

Residues 1–188 form a CPSase region; it reads MIRKERAILA…ALPYAFPTLR (188 aa). Residues Ser-49, Gly-240, and Gly-242 each contribute to the L-glutamine site. The 188-residue stretch at 192–379 folds into the Glutamine amidotransferase type-1 domain; sequence RVVLMDFGIK…IEEIDAFDGG (188 aa). Residue Cys-267 is the Nucleophile of the active site. Residues Leu-268, Gln-271, Asn-309, Gly-311, and Tyr-312 each coordinate L-glutamine. Catalysis depends on residues His-352 and Glu-354.

This sequence belongs to the CarA family. As to quaternary structure, composed of two chains; the small (or glutamine) chain promotes the hydrolysis of glutamine to ammonia, which is used by the large (or ammonia) chain to synthesize carbamoyl phosphate. Tetramer of heterodimers (alpha,beta)4.

The enzyme catalyses hydrogencarbonate + L-glutamine + 2 ATP + H2O = carbamoyl phosphate + L-glutamate + 2 ADP + phosphate + 2 H(+). It catalyses the reaction L-glutamine + H2O = L-glutamate + NH4(+). It functions in the pathway amino-acid biosynthesis; L-arginine biosynthesis; carbamoyl phosphate from bicarbonate: step 1/1. Its pathway is pyrimidine metabolism; UMP biosynthesis via de novo pathway; (S)-dihydroorotate from bicarbonate: step 1/3. Small subunit of the glutamine-dependent carbamoyl phosphate synthetase (CPSase). CPSase catalyzes the formation of carbamoyl phosphate from the ammonia moiety of glutamine, carbonate, and phosphate donated by ATP, constituting the first step of 2 biosynthetic pathways, one leading to arginine and/or urea and the other to pyrimidine nucleotides. The small subunit (glutamine amidotransferase) binds and cleaves glutamine to supply the large subunit with the substrate ammonia. The sequence is that of Carbamoyl phosphate synthase small chain from Deinococcus radiodurans (strain ATCC 13939 / DSM 20539 / JCM 16871 / CCUG 27074 / LMG 4051 / NBRC 15346 / NCIMB 9279 / VKM B-1422 / R1).